We begin with the raw amino-acid sequence, 320 residues long: Lipoyl synthase (320 aa).

7 residues coordinate [4Fe-4S] cluster: C66, C71, C77, C92, C96, C99, and S306. Residues 77 to 295 form the Radical SAM core domain; that stretch reads CFGHGTATFM…AEIGYAMGFS (219 aa).

Belongs to the radical SAM superfamily. Lipoyl synthase family. It depends on [4Fe-4S] cluster as a cofactor.

It is found in the cytoplasm. The catalysed reaction is [[Fe-S] cluster scaffold protein carrying a second [4Fe-4S](2+) cluster] + N(6)-octanoyl-L-lysyl-[protein] + 2 oxidized [2Fe-2S]-[ferredoxin] + 2 S-adenosyl-L-methionine + 4 H(+) = [[Fe-S] cluster scaffold protein] + N(6)-[(R)-dihydrolipoyl]-L-lysyl-[protein] + 4 Fe(3+) + 2 hydrogen sulfide + 2 5'-deoxyadenosine + 2 L-methionine + 2 reduced [2Fe-2S]-[ferredoxin]. The protein operates within protein modification; protein lipoylation via endogenous pathway; protein N(6)-(lipoyl)lysine from octanoyl-[acyl-carrier-protein]: step 2/2. Its function is as follows. Catalyzes the radical-mediated insertion of two sulfur atoms into the C-6 and C-8 positions of the octanoyl moiety bound to the lipoyl domains of lipoate-dependent enzymes, thereby converting the octanoylated domains into lipoylated derivatives. The chain is Lipoyl synthase from Thioalkalivibrio sulfidiphilus (strain HL-EbGR7).